A 623-amino-acid chain; its full sequence is Glutathione import ATP-binding protein GsiA (623 aa).

2 ABC transporter domains span residues 15–269 and 314–564; these read VENL…RALL and LRVR…RKLL. ATP is bound by residues 49–56 and 357–364; these read GESGSGKS.

It belongs to the ABC transporter superfamily. Glutathione importer (TC 3.A.1.5.11) family. The complex is composed of two ATP-binding proteins (GsiA), two transmembrane proteins (GsiC and GsiD) and a solute-binding protein (GsiB).

Its subcellular location is the cell inner membrane. The catalysed reaction is glutathione(out) + ATP + H2O = glutathione(in) + ADP + phosphate + H(+). Its function is as follows. Part of the ABC transporter complex GsiABCD involved in glutathione import. Responsible for energy coupling to the transport system. The polypeptide is Glutathione import ATP-binding protein GsiA (Shigella dysenteriae serotype 1 (strain Sd197)).